The sequence spans 332 residues: 2-hydroxyacid dehydrogenase homolog 2 (332 aa).

NAD(+) is bound by residues 154 to 155 (KI), 233 to 235 (TSR), and Asp-259. The active site involves Arg-235. Residue Glu-264 is part of the active site. His-296 functions as the Proton donor in the catalytic mechanism. An NAD(+)-binding site is contributed by 296–299 (HQAF).

This sequence belongs to the D-isomer specific 2-hydroxyacid dehydrogenase family.

Its subcellular location is the cytoplasm. It is found in the nucleus. This chain is 2-hydroxyacid dehydrogenase homolog 2, found in Schizosaccharomyces pombe (strain 972 / ATCC 24843) (Fission yeast).